The primary structure comprises 173 residues: Ribosome maturation factor RimM (173 aa).

Residues 95–169 (EGSYYFKDIL…RIEVTLLEGL (75 aa)) enclose the PRC barrel domain.

The protein belongs to the RimM family. In terms of assembly, binds ribosomal protein uS19.

It localises to the cytoplasm. Functionally, an accessory protein needed during the final step in the assembly of 30S ribosomal subunit, possibly for assembly of the head region. Essential for efficient processing of 16S rRNA. May be needed both before and after RbfA during the maturation of 16S rRNA. It has affinity for free ribosomal 30S subunits but not for 70S ribosomes. In Lactobacillus johnsonii (strain CNCM I-12250 / La1 / NCC 533), this protein is Ribosome maturation factor RimM.